The primary structure comprises 368 residues: Aminomethyltransferase (368 aa).

It belongs to the GcvT family. As to quaternary structure, the glycine cleavage system is composed of four proteins: P, T, L and H.

The catalysed reaction is N(6)-[(R)-S(8)-aminomethyldihydrolipoyl]-L-lysyl-[protein] + (6S)-5,6,7,8-tetrahydrofolate = N(6)-[(R)-dihydrolipoyl]-L-lysyl-[protein] + (6R)-5,10-methylene-5,6,7,8-tetrahydrofolate + NH4(+). Functionally, the glycine cleavage system catalyzes the degradation of glycine. The polypeptide is Aminomethyltransferase (Xylella fastidiosa (strain 9a5c)).